The chain runs to 470 residues: 6-phospho-beta-galactosidase 1 (470 aa).

Gln23, His120, Asn163, Glu164, and Asn300 together coordinate D-galactose 6-phosphate. Catalysis depends on Glu164, which acts as the Proton donor. The active-site Nucleophile is Glu378. Ser434, Trp435, Lys441, and Tyr443 together coordinate D-galactose 6-phosphate.

It belongs to the glycosyl hydrolase 1 family.

The enzyme catalyses a 6-phospho-beta-D-galactoside + H2O = D-galactose 6-phosphate + an alcohol. The protein operates within carbohydrate metabolism; lactose degradation; D-galactose 6-phosphate and beta-D-glucose from lactose 6-phosphate: step 1/1. This chain is 6-phospho-beta-galactosidase 1, found in Streptococcus pneumoniae (strain ATCC BAA-255 / R6).